A 198-amino-acid polypeptide reads, in one-letter code: Recombination protein RecR (198 aa).

The C4-type zinc-finger motif lies at 57-72; that stretch reads CSVCGHITDRDPCYIC. The Toprim domain maps to 80 to 175; it reads SVVCVVQEPK…KVTRIAHGLP (96 aa).

It belongs to the RecR family.

Its function is as follows. May play a role in DNA repair. It seems to be involved in an RecBC-independent recombinational process of DNA repair. It may act with RecF and RecO. The polypeptide is Recombination protein RecR (Bacillus thuringiensis (strain Al Hakam)).